The primary structure comprises 371 residues: Bifunctional enzyme IspD/IspF (371 aa).

The tract at residues Met1–Phe212 is 2-C-methyl-D-erythritol 4-phosphate cytidylyltransferase. The 2-C-methyl-D-erythritol 2,4-cyclodiphosphate synthase stretch occupies residues Phe212–Lys371. A divalent metal cation is bound by residues Asp218 and His220. Residues Asp218–His220 and His244–Ser245 contribute to the 4-CDP-2-C-methyl-D-erythritol 2-phosphate site. His252 serves as a coordination point for a divalent metal cation. 4-CDP-2-C-methyl-D-erythritol 2-phosphate is bound by residues Asp266–Gly268, Phe271–Asp275, Thr342–Glu345, Phe349, and Arg352.

In the N-terminal section; belongs to the IspD/TarI cytidylyltransferase family. IspD subfamily. This sequence in the C-terminal section; belongs to the IspF family. The cofactor is a divalent metal cation.

The enzyme catalyses 2-C-methyl-D-erythritol 4-phosphate + CTP + H(+) = 4-CDP-2-C-methyl-D-erythritol + diphosphate. It catalyses the reaction 4-CDP-2-C-methyl-D-erythritol 2-phosphate = 2-C-methyl-D-erythritol 2,4-cyclic diphosphate + CMP. It participates in isoprenoid biosynthesis; isopentenyl diphosphate biosynthesis via DXP pathway; isopentenyl diphosphate from 1-deoxy-D-xylulose 5-phosphate: step 2/6. The protein operates within isoprenoid biosynthesis; isopentenyl diphosphate biosynthesis via DXP pathway; isopentenyl diphosphate from 1-deoxy-D-xylulose 5-phosphate: step 4/6. Functionally, bifunctional enzyme that catalyzes the formation of 4-diphosphocytidyl-2-C-methyl-D-erythritol from CTP and 2-C-methyl-D-erythritol 4-phosphate (MEP) (IspD), and catalyzes the conversion of 4-diphosphocytidyl-2-C-methyl-D-erythritol 2-phosphate (CDP-ME2P) to 2-C-methyl-D-erythritol 2,4-cyclodiphosphate (ME-CPP) with a corresponding release of cytidine 5-monophosphate (CMP) (IspF). In Campylobacter curvus (strain 525.92), this protein is Bifunctional enzyme IspD/IspF.